A 30-amino-acid polypeptide reads, in one-letter code: Cysteine-rich venom protein annuliferin-a (30 aa).

Belongs to the CRISP family. Post-translationally, contains 8 disulfide bonds. As to expression, expressed by the venom gland.

Its subcellular location is the secreted. In terms of biological role, inhibits calcium-activated potassium channels (KCa), voltage-gated potassium channel (Kv), and the calcium release channel/ryanodine receptor (RyR). The polypeptide is Cysteine-rich venom protein annuliferin-a (Naja annulifera (Banded Egyptian cobra)).